A 729-amino-acid chain; its full sequence is Fatty acid oxidation complex subunit alpha (729 aa).

Positions 1–189 (MLYKGDTLYL…KIGLVDGVVK (189 aa)) are enoyl-CoA hydratase/isomerase. A substrate-binding site is contributed by Asp296. A 3-hydroxyacyl-CoA dehydrogenase region spans residues 311-729 (ETPKQAAVLG…ARPVGDLKTA (419 aa)). Residues Met324, Asp343, 400–402 (VVE), Lys407, and Ser429 contribute to the NAD(+) site. The active-site For 3-hydroxyacyl-CoA dehydrogenase activity is His450. Position 453 (Asn453) interacts with NAD(+). The substrate site is built by Asn500 and Tyr660. The segment at 708-729 (RHNEPYYPPVEPARPVGDLKTA) is disordered.

It in the N-terminal section; belongs to the enoyl-CoA hydratase/isomerase family. In the C-terminal section; belongs to the 3-hydroxyacyl-CoA dehydrogenase family. In terms of assembly, heterotetramer of two alpha chains (FadB) and two beta chains (FadA).

The catalysed reaction is a (3S)-3-hydroxyacyl-CoA + NAD(+) = a 3-oxoacyl-CoA + NADH + H(+). The enzyme catalyses a (3S)-3-hydroxyacyl-CoA = a (2E)-enoyl-CoA + H2O. It carries out the reaction a 4-saturated-(3S)-3-hydroxyacyl-CoA = a (3E)-enoyl-CoA + H2O. It catalyses the reaction (3S)-3-hydroxybutanoyl-CoA = (3R)-3-hydroxybutanoyl-CoA. The catalysed reaction is a (3Z)-enoyl-CoA = a 4-saturated (2E)-enoyl-CoA. The enzyme catalyses a (3E)-enoyl-CoA = a 4-saturated (2E)-enoyl-CoA. It participates in lipid metabolism; fatty acid beta-oxidation. Its function is as follows. Involved in the aerobic and anaerobic degradation of long-chain fatty acids via beta-oxidation cycle. Catalyzes the formation of 3-oxoacyl-CoA from enoyl-CoA via L-3-hydroxyacyl-CoA. It can also use D-3-hydroxyacyl-CoA and cis-3-enoyl-CoA as substrate. This is Fatty acid oxidation complex subunit alpha from Escherichia coli O139:H28 (strain E24377A / ETEC).